A 124-amino-acid polypeptide reads, in one-letter code: Small ribosomal subunit protein uS12 (124 aa).

At Asp89 the chain carries 3-methylthioaspartic acid. The interval 105–124 is disordered; that stretch reads TGVDSRMQGRSKYGTKKPKK.

The protein belongs to the universal ribosomal protein uS12 family. As to quaternary structure, part of the 30S ribosomal subunit. Contacts proteins S8 and S17. May interact with IF1 in the 30S initiation complex.

Functionally, with S4 and S5 plays an important role in translational accuracy. Its function is as follows. Interacts with and stabilizes bases of the 16S rRNA that are involved in tRNA selection in the A site and with the mRNA backbone. Located at the interface of the 30S and 50S subunits, it traverses the body of the 30S subunit contacting proteins on the other side and probably holding the rRNA structure together. The combined cluster of proteins S8, S12 and S17 appears to hold together the shoulder and platform of the 30S subunit. This Vesicomyosocius okutanii subsp. Calyptogena okutanii (strain HA) protein is Small ribosomal subunit protein uS12.